We begin with the raw amino-acid sequence, 425 residues long: MAAKWEKLEGNVGVLTIEVDAKEVNNSIDAAFKKVVKTINVPGFRKGKMPRPLFEQRFGVESLYQDALDIILPKAYGEAIDEAGIFPVAHPEIDIEKFEKNANLIFTAKVTVKPEVKLGEYKGLAVEKVETTVTDEDVENELKSLQERQAELVVKEEGTVENGDTAVIDFEGFVDGEAFEGGKGENYSLAIGSGTFIPGFEEQVIGLKSGESKDVEVSFPEEYHAAELAGKPATFKVTVHEIKTKELPELNDEFAKEADEAVATLDELKAKLRTNLEEGKKHEAEHKVRDEVVELAAANAEIDIPEAMIDTELDRMVREFEQRLSQQGMNLELYYQFTGTDADKLKEQMKEDAQKRVRINLVLEAIIEAENIEVTEEEVTAEVEKMAEMYGMPVDAIKQALGSVDALAEDLKVRKAVDFLVENAA.

One can recognise a PPIase FKBP-type domain in the interval glycine 163–proline 248.

The protein belongs to the FKBP-type PPIase family. Tig subfamily.

The protein localises to the cytoplasm. The enzyme catalyses [protein]-peptidylproline (omega=180) = [protein]-peptidylproline (omega=0). Involved in protein export. Acts as a chaperone by maintaining the newly synthesized protein in an open conformation. Functions as a peptidyl-prolyl cis-trans isomerase. The protein is Trigger factor of Bacillus cereus (strain ATCC 10987 / NRS 248).